Consider the following 330-residue polypeptide: MAILAFQKPDKVLMLEADSRFGKFEFRPLEPGFGITVGNALRRILLSSLEGFAINTIKIEGVEHEFASVPGVKEDVTNIILNLKQVRFKQVVEEFENEKVSITVENSSEFKAGDISKYLTGFEVLNPELVICHLDSKATMQMDITINKGRGYVPADENREYCTDVNVIPIDSIYTPIRNVKYQVENFRVEQKTDYEKLVLEITTDGSIHPKEALKEAAKILIYHFMLFSDEKITLETSDVDGNEEFDEEVLHMRQLLKTKLVDMDLSVRALNCLKAADVETLGDLVQFNKTDLLKFRNFGKKSLTELDDLLEGLNLSFGTDISKYKLDKE.

An alpha N-terminal domain (alpha-NTD) region spans residues 1 to 231; the sequence is MAILAFQKPD…IYHFMLFSDE (231 aa). Residues 253–330 form an alpha C-terminal domain (alpha-CTD) region; that stretch reads MRQLLKTKLV…DISKYKLDKE (78 aa).

The protein belongs to the RNA polymerase alpha chain family. As to quaternary structure, homodimer. The RNAP catalytic core consists of 2 alpha, 1 beta, 1 beta' and 1 omega subunit. When a sigma factor is associated with the core the holoenzyme is formed, which can initiate transcription.

The catalysed reaction is RNA(n) + a ribonucleoside 5'-triphosphate = RNA(n+1) + diphosphate. Functionally, DNA-dependent RNA polymerase catalyzes the transcription of DNA into RNA using the four ribonucleoside triphosphates as substrates. The polypeptide is DNA-directed RNA polymerase subunit alpha (Phocaeicola vulgatus (strain ATCC 8482 / DSM 1447 / JCM 5826 / CCUG 4940 / NBRC 14291 / NCTC 11154) (Bacteroides vulgatus)).